Reading from the N-terminus, the 189-residue chain is NADH-quinone oxidoreductase subunit B (189 aa).

[4Fe-4S] cluster is bound by residues C39, C40, C104, and C135.

It belongs to the complex I 20 kDa subunit family. NDH-1 is composed of 14 different subunits. Subunits NuoB, C, D, E, F, and G constitute the peripheral sector of the complex. It depends on [4Fe-4S] cluster as a cofactor.

It localises to the cell inner membrane. The catalysed reaction is a quinone + NADH + 5 H(+)(in) = a quinol + NAD(+) + 4 H(+)(out). Its function is as follows. NDH-1 shuttles electrons from NADH, via FMN and iron-sulfur (Fe-S) centers, to quinones in the respiratory chain. The immediate electron acceptor for the enzyme in this species is believed to be a menaquinone. Couples the redox reaction to proton translocation (for every two electrons transferred, four hydrogen ions are translocated across the cytoplasmic membrane), and thus conserves the redox energy in a proton gradient. This is NADH-quinone oxidoreductase subunit B from Chlorobium limicola (strain DSM 245 / NBRC 103803 / 6330).